Reading from the N-terminus, the 316-residue chain is Ribosomal protein L11 methyltransferase (316 aa).

The S-adenosyl-L-methionine site is built by Thr159, Gly179, Asp201, and Asn243.

Belongs to the methyltransferase superfamily. PrmA family.

The protein localises to the cytoplasm. The enzyme catalyses L-lysyl-[protein] + 3 S-adenosyl-L-methionine = N(6),N(6),N(6)-trimethyl-L-lysyl-[protein] + 3 S-adenosyl-L-homocysteine + 3 H(+). In terms of biological role, methylates ribosomal protein L11. The sequence is that of Ribosomal protein L11 methyltransferase from Gloeobacter violaceus (strain ATCC 29082 / PCC 7421).